The primary structure comprises 279 residues: Acyl-[acyl-carrier-protein]--UDP-N-acetylglucosamine O-acyltransferase (279 aa).

It belongs to the transferase hexapeptide repeat family. LpxA subfamily. Homotrimer.

It is found in the cytoplasm. It catalyses the reaction a (3R)-hydroxyacyl-[ACP] + UDP-N-acetyl-alpha-D-glucosamine = a UDP-3-O-[(3R)-3-hydroxyacyl]-N-acetyl-alpha-D-glucosamine + holo-[ACP]. Its pathway is glycolipid biosynthesis; lipid IV(A) biosynthesis; lipid IV(A) from (3R)-3-hydroxytetradecanoyl-[acyl-carrier-protein] and UDP-N-acetyl-alpha-D-glucosamine: step 1/6. Functionally, involved in the biosynthesis of lipid A, a phosphorylated glycolipid that anchors the lipopolysaccharide to the outer membrane of the cell. This chain is Acyl-[acyl-carrier-protein]--UDP-N-acetylglucosamine O-acyltransferase, found in Mesorhizobium japonicum (strain LMG 29417 / CECT 9101 / MAFF 303099) (Mesorhizobium loti (strain MAFF 303099)).